Here is a 104-residue protein sequence, read N- to C-terminus: Large ribosomal subunit protein uL24 (104 aa).

This sequence belongs to the universal ribosomal protein uL24 family. In terms of assembly, part of the 50S ribosomal subunit.

One of two assembly initiator proteins, it binds directly to the 5'-end of the 23S rRNA, where it nucleates assembly of the 50S subunit. In terms of biological role, one of the proteins that surrounds the polypeptide exit tunnel on the outside of the subunit. The protein is Large ribosomal subunit protein uL24 of Rhodopseudomonas palustris (strain BisB5).